We begin with the raw amino-acid sequence, 147 residues long: Ubiquitin-conjugating enzyme E2-17 kDa (147 aa).

In terms of domain architecture, UBC core spans 1–147 (MALKRINKEL…AREWTRKYAM (147 aa)). The active-site Glycyl thioester intermediate is Cys85.

This sequence belongs to the ubiquitin-conjugating enzyme family.

It catalyses the reaction S-ubiquitinyl-[E1 ubiquitin-activating enzyme]-L-cysteine + [E2 ubiquitin-conjugating enzyme]-L-cysteine = [E1 ubiquitin-activating enzyme]-L-cysteine + S-ubiquitinyl-[E2 ubiquitin-conjugating enzyme]-L-cysteine.. It participates in protein modification; protein ubiquitination. Catalyzes the covalent attachment of ubiquitin to other proteins. Mediates the selective degradation of short-lived and abnormal proteins. Required for proper telomere behavior during cell divisions and possibly for ubiquitination of proteins involved in postmeiotic stages of spermatogenesis. Deletion mutations are lethal in homozygotes. The protein is Ubiquitin-conjugating enzyme E2-17 kDa (eff) of Drosophila melanogaster (Fruit fly).